Here is a 492-residue protein sequence, read N- to C-terminus: Catalase isozyme B (492 aa).

The disordered stretch occupies residues 1–20 (MDPYKHRPSSGSNSTFWTTN). Residues 9-20 (SSGSNSTFWTTN) show a composition bias toward polar residues. Arg-62 is a heme binding site. His-65 is an active-site residue. Arg-102 lines the heme pocket. Asn-138 is an active-site residue. A heme-binding site is contributed by Phe-151. Tyr-210 is subject to Phosphotyrosine. A cross-link (3-(S-cysteinyl)-tyrosine (Cys-Tyr)) is located at residues 325–348 (CPAIIVPGIHYSDDKLLQTRIFSY). Positions 344, 348, and 355 each coordinate heme. Positions 484-492 (SRLNLKPNM) match the Peroxisome targeting signal motif.

It belongs to the catalase family. In terms of assembly, homotetramer. Interacts with GLO1 and GLO4; these interactions are disturbed by alpha-hydroxy-2-pyridinemethanesulfonic acid (HPMS) and salicylic acid (SA). Interacts with STRK1 at the plasma membrane. The cofactor is heme. Predominantly expressed in roots and, at low levels, in leaves (e.g. sheaths). Detected in seeds. Also present in panicles and culms. Observed in stems and anthers.

Its subcellular location is the peroxisome. It localises to the glyoxysome. It is found in the cell membrane. The catalysed reaction is 2 H2O2 = O2 + 2 H2O. With respect to regulation, strongly inhibited by beta-mercaptoethanol, sodium azide and potassium cyanide. Slightly repressed by 3-amino-1,2,4-triazole (3-AT). Activity is repressed proportionally to increased concentration of NaCl, KCl, LiCl and MgCl(2). Functionally, occurs in almost all aerobically respiring organisms and serves to protect cells from the toxic effects of hydrogen peroxide. May prevent the excessive accumulation of H(2)O(2) during water stress in response to the accumulation of abscisic acid (ABA). Involved in the modulation of ROS levels related to root growth regulation. Required for pollen viability and floret fertility upon heat stress (HS) by detoxifying reactive oxygen species (ROS) and malondialdehyde (MDA) accumulation in developing anthers exposed to HS. This Oryza sativa subsp. japonica (Rice) protein is Catalase isozyme B (CATB).